Consider the following 284-residue polypeptide: Tropomyosin (284 aa).

The interval methionine 1–glutamate 54 is disordered. Residues methionine 1–glutamate 273 are a coiled coil. The span at lysine 12 to alanine 45 shows a compositional bias: basic and acidic residues.

Belongs to the tropomyosin family. In terms of assembly, homodimer. As to expression, muscle (at protein level). Expressed in leg and chest protection muscle (at protein level). Expressed in claw muscle.

Its function is as follows. Tropomyosin, in association with the troponin complex, plays a central role in the calcium dependent regulation of muscle contraction. The polypeptide is Tropomyosin (Eriocheir sinensis (Chinese mitten crab)).